The sequence spans 315 residues: Lipoyl synthase (315 aa).

7 residues coordinate [4Fe-4S] cluster: Cys-62, Cys-67, Cys-73, Cys-88, Cys-92, Cys-95, and Ser-302. The Radical SAM core domain occupies 74-291 (FGKGTATFMI…ETEALAMGFK (218 aa)).

It belongs to the radical SAM superfamily. Lipoyl synthase family. [4Fe-4S] cluster is required as a cofactor.

It is found in the cytoplasm. It catalyses the reaction [[Fe-S] cluster scaffold protein carrying a second [4Fe-4S](2+) cluster] + N(6)-octanoyl-L-lysyl-[protein] + 2 oxidized [2Fe-2S]-[ferredoxin] + 2 S-adenosyl-L-methionine + 4 H(+) = [[Fe-S] cluster scaffold protein] + N(6)-[(R)-dihydrolipoyl]-L-lysyl-[protein] + 4 Fe(3+) + 2 hydrogen sulfide + 2 5'-deoxyadenosine + 2 L-methionine + 2 reduced [2Fe-2S]-[ferredoxin]. Its pathway is protein modification; protein lipoylation via endogenous pathway; protein N(6)-(lipoyl)lysine from octanoyl-[acyl-carrier-protein]: step 2/2. In terms of biological role, catalyzes the radical-mediated insertion of two sulfur atoms into the C-6 and C-8 positions of the octanoyl moiety bound to the lipoyl domains of lipoate-dependent enzymes, thereby converting the octanoylated domains into lipoylated derivatives. This Aromatoleum aromaticum (strain DSM 19018 / LMG 30748 / EbN1) (Azoarcus sp. (strain EbN1)) protein is Lipoyl synthase.